We begin with the raw amino-acid sequence, 804 residues long: Probable protein phosphatase 2C 18 (804 aa).

A helical membrane pass occupies residues 19-39; the sequence is DASGPVLFWCVLIIFAVPDAI. The region spanning 129 to 434 is the PPM-type phosphatase domain; it reads KYIVSSMQGL…ENTTVILVQF (306 aa). The Mn(2+) site is built by aspartate 165, glycine 166, glutamine 384, and glutamate 425. Disordered stretches follow at residues 460-509, 564-599, 623-653, and 675-804; these read STSA…GGSA, DEVE…LNAS, PLQG…DDDV, and VDST…EGSP. Residues 468 to 499 show a composition bias toward low complexity; that stretch reads GSDSDTSATSDEGVDDTATAGTTTTGYEAGSS. The span at 628–637 shows a compositional bias: polar residues; that stretch reads DVSSTSTNPN. Over residues 638–647 the composition is skewed to low complexity; sequence TATDTGSGSR. Residues 713 to 734 show a composition bias toward polar residues; it reads LVNNDTTVADNNASGVADSTTV. Over residues 776–789 the composition is skewed to low complexity; it reads DATATATASASAAV. Residues 790–804 are compositionally biased toward acidic residues; it reads ADDEGTAPDDSEGSP.

It belongs to the PP2C family. Requires Mg(2+) as cofactor. It depends on Mn(2+) as a cofactor.

The protein resides in the membrane. The enzyme catalyses O-phospho-L-seryl-[protein] + H2O = L-seryl-[protein] + phosphate. The catalysed reaction is O-phospho-L-threonyl-[protein] + H2O = L-threonyl-[protein] + phosphate. In Oryza sativa subsp. japonica (Rice), this protein is Probable protein phosphatase 2C 18.